A 255-amino-acid chain; its full sequence is 5'-nucleotidase SurE (255 aa).

Residues Asp-8, Asp-9, Ser-40, and Asn-93 each coordinate a divalent metal cation.

The protein belongs to the SurE nucleotidase family. Requires a divalent metal cation as cofactor.

Its subcellular location is the cytoplasm. It carries out the reaction a ribonucleoside 5'-phosphate + H2O = a ribonucleoside + phosphate. Functionally, nucleotidase that shows phosphatase activity on nucleoside 5'-monophosphates. The chain is 5'-nucleotidase SurE from Bradyrhizobium sp. (strain ORS 278).